A 290-amino-acid chain; its full sequence is TIMELESS-interacting protein (290 aa).

Residues 1–59 (MLEPQENGLTDLPDYEHIEDETFPPFPPPASPGREDGEGAEPEEESGRGAPVPVPPKRT) form a disordered region. Residues 67–143 (LNAERLISER…KEVQTCLKRI (77 aa)) form an interaction with TIMELESS region. Phosphoserine is present on residues Ser-194 and Ser-222. Polar residues predominate over residues 221 to 242 (NSQSLGNDLSVNTPSTQTSEAG). Positions 221 to 290 (NSQSLGNDLS…VEETQLDQSF (70 aa)) are disordered. Phosphothreonine is present on residues Thr-233 and Thr-244.

The protein belongs to the CSM3 family. Interacts with TIMELESS (via N-terminus), which impairs TIMELESS self-association. Associates with the MCM2-7 complex. Interacts with RPA2, PRDX2.

The protein resides in the cytoplasm. It localises to the nucleus. Functionally, plays an important role in the control of DNA replication and the maintenance of replication fork stability. Important for cell survival after DNA damage or replication stress. May be specifically required for the ATR-CHEK1 pathway in the replication checkpoint induced by hydroxyurea or ultraviolet light. Forms a complex with TIMELESS and this complex regulates DNA replication processes under both normal and stress conditions, stabilizes replication forks and influences both CHEK1 phosphorylation and the intra-S phase checkpoint in response to genotoxic stress. The chain is TIMELESS-interacting protein (TIPIN) from Bos taurus (Bovine).